We begin with the raw amino-acid sequence, 532 residues long: Probable cytochrome c oxidase subunit 1 (532 aa).

Transmembrane regions (helical) follow at residues 33 to 53 (IMYI…SLLF), 74 to 94 (VLIT…ALFG), 95 to 115 (GFGN…FPRL), 118 to 138 (ISFW…FVDG), 163 to 183 (MAIF…INLI), 200 to 220 (PLFV…MPVL), 252 to 272 (LFWF…FGIV), and 284 to 304 (IFGY…GFIV). His-79 lines the Fe(II)-heme a pocket. Residues His-258 and Tyr-262 each coordinate Cu cation. Positions 307 and 308 each coordinate Cu cation. 2 helical membrane-spanning segments follow: residues 318–338 (ALIY…IKIF) and 355–375 (MLFS…GIIL). Residue His-393 coordinates heme a3. 3 helical membrane-spanning segments follow: residues 394 to 414 (FHYT…YYWF), 431 to 451 (FWIT…LGLA), and 473 to 493 (IGAG…FYTL). His-395 is a binding site for Fe(II)-heme a.

Belongs to the heme-copper respiratory oxidase family.

Its subcellular location is the cell membrane. The catalysed reaction is 4 Fe(II)-[cytochrome c] + O2 + 8 H(+)(in) = 4 Fe(III)-[cytochrome c] + 2 H2O + 4 H(+)(out). It functions in the pathway energy metabolism; oxidative phosphorylation. Cytochrome c oxidase is the component of the respiratory chain that catalyzes the reduction of oxygen to water. Subunits 1-3 form the functional core of the enzyme complex. CO I is the catalytic subunit of the enzyme. Electrons originating in cytochrome c are transferred via the copper A center of subunit 2 and heme A of subunit 1 to the bimetallic center formed by heme A3 and copper B. In Rickettsia bellii (strain RML369-C), this protein is Probable cytochrome c oxidase subunit 1 (ctaD).